Consider the following 342-residue polypeptide: Porphobilinogen deaminase (342 aa).

The residue at position 249 (Cys-249) is an S-(dipyrrolylmethanemethyl)cysteine. The disordered stretch occupies residues 323–342 (AAAKQGAAEDGAADSAATGE).

It belongs to the HMBS family. Monomer. Dipyrromethane is required as a cofactor.

The catalysed reaction is 4 porphobilinogen + H2O = hydroxymethylbilane + 4 NH4(+). The protein operates within porphyrin-containing compound metabolism; protoporphyrin-IX biosynthesis; coproporphyrinogen-III from 5-aminolevulinate: step 2/4. Tetrapolymerization of the monopyrrole PBG into the hydroxymethylbilane pre-uroporphyrinogen in several discrete steps. The protein is Porphobilinogen deaminase of Paraburkholderia phytofirmans (strain DSM 17436 / LMG 22146 / PsJN) (Burkholderia phytofirmans).